We begin with the raw amino-acid sequence, 655 residues long: Probable glucan endo-1,3-beta-glucosidase btgC (655 aa).

2 disordered regions span residues 1 to 61 (MSGD…ATPG) and 89 to 114 (SGVD…PGSD). Over 1 to 282 (MSGDPRSFSF…PKPGTGSRKR (282 aa)) the chain is Cytoplasmic. A compositionally biased stretch (polar residues) spans 19–33 (DSSQQPLHPTNTMAD). Basic and acidic residues predominate over residues 89–98 (SGVDAFRDTD). A helical; Signal-anchor for type II membrane protein membrane pass occupies residues 283–303 (GWIVGIILAVVIVGAIVGGAV). Residues 304–655 (GGTLGNREKE…IPDCGGKTAT (352 aa)) lie on the Extracellular side of the membrane. A disordered region spans residues 305-338 (GTLGNREKESPSSSETASGDEKVNGDLGKDSDEI). The segment covering 323–338 (GDEKVNGDLGKDSDEI) has biased composition (basic and acidic residues). N-linked (GlcNAc...) asparagine glycosylation occurs at asparagine 426. Glutamate 458 serves as the catalytic Proton donor. Glutamate 557 (nucleophile) is an active-site residue. N-linked (GlcNAc...) asparagine glycosylation is found at asparagine 576 and asparagine 602.

The protein belongs to the glycosyl hydrolase 17 family.

The protein localises to the cell membrane. It carries out the reaction Hydrolysis of (1-&gt;3)-beta-D-glucosidic linkages in (1-&gt;3)-beta-D-glucans.. Glucanases play a role in cell expansion during growth, in cell-cell fusion during mating, and in spore release during sporulation. This enzyme may be involved in beta-glucan degradation. Active on laminarin and lichenan. This Aspergillus terreus (strain NIH 2624 / FGSC A1156) protein is Probable glucan endo-1,3-beta-glucosidase btgC (btgC).